The primary structure comprises 156 residues: Cyanate hydratase (156 aa).

Catalysis depends on residues arginine 96, glutamate 99, and serine 122.

This sequence belongs to the cyanase family.

It carries out the reaction cyanate + hydrogencarbonate + 3 H(+) = NH4(+) + 2 CO2. Its function is as follows. Catalyzes the reaction of cyanate with bicarbonate to produce ammonia and carbon dioxide. The chain is Cyanate hydratase from Pseudomonas aeruginosa (strain LESB58).